Consider the following 513-residue polypeptide: Maturase K (513 aa).

The protein belongs to the intron maturase 2 family. MatK subfamily.

Its subcellular location is the plastid. The protein resides in the chloroplast. Functionally, usually encoded in the trnK tRNA gene intron. Probably assists in splicing its own and other chloroplast group II introns. This is Maturase K from Cyrilla racemiflora (Swamp titi).